Consider the following 91-residue polypeptide: Elongation factor 1-beta (91 aa).

Belongs to the EF-1-beta/EF-1-delta family.

Functionally, promotes the exchange of GDP for GTP in EF-1-alpha/GDP, thus allowing the regeneration of EF-1-alpha/GTP that could then be used to form the ternary complex EF-1-alpha/GTP/AAtRNA. This is Elongation factor 1-beta (ef1b) from Pyrococcus horikoshii (strain ATCC 700860 / DSM 12428 / JCM 9974 / NBRC 100139 / OT-3).